The chain runs to 89 residues: Small ribosomal subunit protein uS15 (89 aa).

This sequence belongs to the universal ribosomal protein uS15 family. As to quaternary structure, part of the 30S ribosomal subunit. Forms a bridge to the 50S subunit in the 70S ribosome, contacting the 23S rRNA.

Functionally, one of the primary rRNA binding proteins, it binds directly to 16S rRNA where it helps nucleate assembly of the platform of the 30S subunit by binding and bridging several RNA helices of the 16S rRNA. Forms an intersubunit bridge (bridge B4) with the 23S rRNA of the 50S subunit in the ribosome. This Tolumonas auensis (strain DSM 9187 / NBRC 110442 / TA 4) protein is Small ribosomal subunit protein uS15.